The sequence spans 429 residues: Probable M18 family aminopeptidase 2 (429 aa).

Residues His-82, His-156, and His-401 each coordinate Zn(2+).

Belongs to the peptidase M18 family. Requires Zn(2+) as cofactor.

The sequence is that of Probable M18 family aminopeptidase 2 from Pseudomonas savastanoi pv. phaseolicola (strain 1448A / Race 6) (Pseudomonas syringae pv. phaseolicola (strain 1448A / Race 6)).